Reading from the N-terminus, the 733-residue chain is MGKRVVATDKELKWKKVDIPDTLDDFGGFYGLEEIDGVDVKVVNGQVQFIASEAQVKEEEESSESDFPDFDAMEQEDDGDVEEAEEEEEEEEDVAEADEPEVKQKQEQARVEQIDKGVDSEKHEDEKETPEDDLATNVFDIDVDLSDVGSGELPGWTDTVDLSMTTINGLSNLGFTEMTPIQKLSIPAALEGKDIMGKASTGSGKTLAYGIPIIEKMIKSKDNLRTNGIIFTPTRELAQQVTKHLQNVCSMLLKKNPYMILSLTGGLSIQKQERLLKYDGSARIVVATPGRFLELIEKNEELMKRFAKIDVLVLDEADRLLQDGHFDEFEKILKHLGRIRKSLKNMEYWQTLIYSATFSTDLFDKLANSSWKKKNNSKDESEMESVLKHLMTKINFKSKPMMIDANPEDKISAQIKESLIECAPLERDLYCYYFVTLYPGTTLIFCNSIESVKKLNAYLINLGINSFQIHSSMTQKNRLKNLEKFEAMASKNNHLGKPTVLIASDVAARGLDIKGIKHVVHYHLPHSADTYIHRSGRTARGDNEGVAVMICSPQEAMGPLRKLRRLLASKEQISKSTKNKKWQQTVPLLPIEIDILQQLRERSSLANDIAEHELASRSLRKDSNWLKQAADELGIDMDSDEEDKDIILAKNKNKKMNKTLDKNELKSMKAELTHLLKIPIRKDMRRSYLTGGLVNLADSLVKKRGHHNIIGHEKTDALNVLKKGKSNKKQKTK.

Residues 53–132 are disordered; sequence EAQVKEEEES…HEDEKETPED (80 aa). Acidic residues predominate over residues 58–99; the sequence is EEEESSESDFPDFDAMEQEDDGDVEEAEEEEEEEEDVAEADE. Residues 100-126 are compositionally biased toward basic and acidic residues; that stretch reads PEVKQKQEQARVEQIDKGVDSEKHEDE. A Q motif motif is present at residues 155–183; the sequence is GWTDTVDLSMTTINGLSNLGFTEMTPIQK. Residues 186–376 form the Helicase ATP-binding domain; sequence IPAALEGKDI…ANSSWKKKNN (191 aa). ATP is bound at residue 199–206; that stretch reads ASTGSGKT. The DEAD box motif lies at 315-318; sequence DEAD. The Helicase C-terminal domain maps to 428-594; that stretch reads DLYCYYFVTL…TVPLLPIEID (167 aa).

This sequence belongs to the DEAD box helicase family. DDX24/MAK5 subfamily.

The protein resides in the nucleus. The protein localises to the nucleolus. It carries out the reaction ATP + H2O = ADP + phosphate + H(+). In terms of biological role, ATP-binding RNA helicase involved in the biogenesis of 60S ribosomal subunits and is required for the normal formation of 25S and 5.8S rRNAs. The sequence is that of ATP-dependent RNA helicase MAK5 (MAK5) from Candida glabrata (strain ATCC 2001 / BCRC 20586 / JCM 3761 / NBRC 0622 / NRRL Y-65 / CBS 138) (Yeast).